Reading from the N-terminus, the 316-residue chain is FAD:protein FMN transferase (316 aa).

FAD-binding positions include methionine 14, alanine 88 to asparagine 90, and aspartate 146. Mg(2+) is bound at residue alanine 149. 2 residues coordinate FAD: lysine 152 and leucine 231. Residues aspartate 257 and threonine 261 each contribute to the Mg(2+) site.

It belongs to the ApbE family. It depends on Mg(2+) as a cofactor.

It is found in the cytoplasm. The catalysed reaction is L-threonyl-[protein] + FAD = FMN-L-threonyl-[protein] + AMP + H(+). Flavin transferase that catalyzes the transfer of the FMN moiety of FAD and its covalent binding to the hydroxyl group of a threonine residue in a target flavoprotein. Is responsible for the modification of the fumarate reductase KPK_2907. This is FAD:protein FMN transferase from Klebsiella pneumoniae (strain 342).